Reading from the N-terminus, the 387-residue chain is Patatin group J-1 (387 aa).

The N-terminal stretch at 1 to 23 (MATTKSFLILIVMILATTSSTFA) is a signal peptide. Residues 32 to 230 (LSIDGGGIKG…TVGDPALLSL (199 aa)) enclose the PNPLA domain. The GXGXXG signature appears at 36 to 41 (GGGIKG). Positions 75 to 79 (GTSTG) match the GXSXG motif. Residue Ser77 is the Nucleophile of the active site. A glycan (N-linked (GlcNAc...) asparagine) is linked at Asn115. Asp216 functions as the Proton acceptor in the catalytic mechanism. The DGA/G motif lies at 216–218 (DGG). Residues 322–385 (ENALTGTTTE…NRKKLRANKA (64 aa)) are a coiled coil.

This sequence belongs to the patatin family. As to expression, tuber.

The protein resides in the vacuole. Probable lipolytic acyl hydrolase (LAH), an activity which is thought to be involved in the response of tubers to pathogens. The sequence is that of Patatin group J-1 from Solanum tuberosum (Potato).